The chain runs to 163 residues: Nucleotide-binding protein Dde_2479 (163 aa).

Belongs to the YajQ family.

Nucleotide-binding protein. The sequence is that of Nucleotide-binding protein Dde_2479 from Oleidesulfovibrio alaskensis (strain ATCC BAA-1058 / DSM 17464 / G20) (Desulfovibrio alaskensis).